The primary structure comprises 82 residues: Small ribosomal subunit protein uS17 (82 aa).

It belongs to the universal ribosomal protein uS17 family. In terms of assembly, part of the 30S ribosomal subunit.

Functionally, one of the primary rRNA binding proteins, it binds specifically to the 5'-end of 16S ribosomal RNA. This is Small ribosomal subunit protein uS17 from Nitrobacter hamburgensis (strain DSM 10229 / NCIMB 13809 / X14).